Reading from the N-terminus, the 119-residue chain is Protein yippee-like 2 (119 aa).

One can recognise a Yippee domain in the interval 19–116 (RTYSCIHCRA…IELAHMIKDN (98 aa)). Zn(2+)-binding residues include C23, C26, C79, and C82.

The protein belongs to the yippee family. In terms of assembly, may interact with FAM168B.

It is found in the nucleus. The protein localises to the nucleolus. This Chlorocebus aethiops (Green monkey) protein is Protein yippee-like 2 (YPEL2).